A 339-amino-acid polypeptide reads, in one-letter code: 2-oxoisovalerate dehydrogenase subunit beta (339 aa).

In terms of assembly, heterodimer of an alpha and a beta chain. Requires thiamine diphosphate as cofactor.

It carries out the reaction N(6)-[(R)-lipoyl]-L-lysyl-[protein] + 3-methyl-2-oxobutanoate + H(+) = N(6)-[(R)-S(8)-2-methylpropanoyldihydrolipoyl]-L-lysyl-[protein] + CO2. In terms of biological role, the branched-chain alpha-keto dehydrogenase complex catalyzes the overall conversion of alpha-keto acids to acyl-CoA and CO(2). It contains multiple copies of three enzymatic components: branched-chain alpha-keto acid decarboxylase (E1), lipoamide acyltransferase (E2) and lipoamide dehydrogenase (E3). This is 2-oxoisovalerate dehydrogenase subunit beta (bkdA2) from Pseudomonas putida (Arthrobacter siderocapsulatus).